A 363-amino-acid polypeptide reads, in one-letter code: MEPLSLASTPSWNASAASSGNHNWSLVGSASPMGARAVLVPVLYLLVCTVGLSGNTLVIYVVLRHAKMKTVTNVYILNLAVADVLFMLGLPFLATQNAVVSYWPFGSFLCRLVMTLDGINQFTSIFCLMVMSVDRYLAVVHPLRSARWRRPRVAKMASAAVWVFSLLMSLPLLVFADVQEGWGTCNLSWPEPVGLWGAAFITYTSVLGFFGPLLVICLCYLLIVVKVKAAGMRVGSSRRRRSEPKVTRMVVVVVLVFVGCWLPFFIVNIVNLAFTLPEEPTSAGLYFFVVVLSYANSCANPLLYGFLSDNFRQSFRKVLCLRRGYGMEDADAIEPRPDKSGRPQATLPTRSCEANGLMQTSRI.

Residues 1 to 35 (MEPLSLASTPSWNASAASSGNHNWSLVGSASPMGA) are Extracellular-facing. Residues asparagine 13 and asparagine 23 are each glycosylated (N-linked (GlcNAc...) asparagine). The chain crosses the membrane as a helical span at residues 36 to 63 (RAVLVPVLYLLVCTVGLSGNTLVIYVVL). Residues 64–73 (RHAKMKTVTN) are Cytoplasmic-facing. The helical transmembrane segment at 74–99 (VYILNLAVADVLFMLGLPFLATQNAV) threads the bilayer. Residues 100–111 (VSYWPFGSFLCR) are Extracellular-facing. Cysteine 110 and cysteine 185 form a disulfide bridge. The chain crosses the membrane as a helical span at residues 112–133 (LVMTLDGINQFTSIFCLMVMSV). Residues 134–155 (DRYLAVVHPLRSARWRRPRVAK) are Cytoplasmic-facing. The helical transmembrane segment at 156–176 (MASAAVWVFSLLMSLPLLVFA) threads the bilayer. Over 177-196 (DVQEGWGTCNLSWPEPVGLW) the chain is Extracellular. N-linked (GlcNAc...) asparagine glycosylation is present at asparagine 186. The chain crosses the membrane as a helical span at residues 197 to 221 (GAAFITYTSVLGFFGPLLVICLCYL). Topologically, residues 222–247 (LIVVKVKAAGMRVGSSRRRRSEPKVT) are cytoplasmic. Residues 248 to 273 (RMVVVVVLVFVGCWLPFFIVNIVNLA) form a helical membrane-spanning segment. Over 274–283 (FTLPEEPTSA) the chain is Extracellular. Residues 284-308 (GLYFFVVVLSYANSCANPLLYGFLS) form a helical membrane-spanning segment. Over 309–363 (DNFRQSFRKVLCLRRGYGMEDADAIEPRPDKSGRPQATLPTRSCEANGLMQTSRI) the chain is Cytoplasmic. A lipid anchor (S-palmitoyl cysteine; by ZDHHC5) is attached at cysteine 320. Positions 331-363 (DAIEPRPDKSGRPQATLPTRSCEANGLMQTSRI) are disordered.

Belongs to the G-protein coupled receptor 1 family. In terms of assembly, heterodimer with SSTR2. Heterodimerization with SSTR2 increases cell growth inhibition activity of SSTR2. Palmitoylated at Cys-320 by ZDHHC5, but not ZDHHC8. Palmitoylation creates an additional intracellular loop which is thought to be important for efficient coupling to G-proteins and may target the protein to lipid rafts. Prominent in the pituitary and small intestine. Low levels in islets and spleen. Not detected in kidney, pancreas, cerebellum, or cortex.

Its subcellular location is the cell membrane. Functionally, receptor for somatostatin-28. The activity of this receptor is mediated by G proteins which inhibit adenylyl cyclase. Increases cell growth inhibition activity of SSTR2 following heterodimerization. The chain is Somatostatin receptor type 5 (Sstr5) from Rattus norvegicus (Rat).